We begin with the raw amino-acid sequence, 992 residues long: GATOR2 complex protein WDR59 (992 aa).

7 WD repeats span residues 57-98, 103-143, 146-185, 189-229, 232-276, 278-318, and 319-362; these read QSKW…GEVG, GHTR…KPTV, SAVA…TAVE, AHLS…KYLN, PCQV…APVH, FVGH…RVDY, and QMQR…SLSH. The tract at residues 343–373 is disordered; it reads PEPEKTPHPQDIDHQPSLSHGEEDAIKEDPP. Residues 344 to 373 show a composition bias toward basic and acidic residues; that stretch reads EPEKTPHPQDIDHQPSLSHGEEDAIKEDPP. The RWD domain occupies 393 to 494; the sequence is QEFSLINVQI…RQLVSCLESF (102 aa). Residue Ser-564 is modified to Phosphoserine. One copy of the WD 8 repeat lies at 660-706; the sequence is KSLGELYILNVNDTQETCQKNATSAMLVGRKDLVQVWSLATVATDLC. Phosphoserine is present on residues Ser-839, Ser-840, and Ser-848. Residues 849–870 are disordered; that stretch reads LTYSDPRERERDQHDKNKRLLD. A compositionally biased stretch (basic and acidic residues) spans 853–869; sequence DPRERERDQHDKNKRLL. Residues 919–939 form a C4-type zinc finger; it reads YCSHCRSEVRGTQCAICKGFT. Zn(2+)-binding residues include Cys-920, Cys-923, Cys-932, Cys-935, Cys-945, Cys-956, His-961, His-964, His-967, Cys-978, Cys-982, Cys-984, and Cys-986. An RING-type; atypical zinc finger spans residues 940–989; it reads FQCAICHVAVRGSSNFCLTCGHGGHTSHMMEWFRTQEVCPTGCGCHCLLE.

It belongs to the WD repeat WDR59 family. In terms of assembly, component of the GATOR2 subcomplex, composed of MIOS, SEC13, SEH1L, WDR24 and WDR59. The GATOR2 complex interacts with CASTOR1 and CASTOR2; the interaction is negatively regulated by arginine. The GATOR2 complex interacts with SESN1, SESN2 and SESN3; the interaction is negatively regulated by amino acids. Interacts with DDB1-CUL4A/B E3 ligase complexes.

Its subcellular location is the lysosome membrane. With respect to regulation, the GATOR2 complex is negatively regulated by the upstream amino acid sensors CASTOR1 and SESN2, which sequester the GATOR2 complex in absence of amino acids. In the presence of abundant amino acids, GATOR2 is released from CASTOR1 and SESN2 and activated. As a component of the GATOR2 complex, functions as an activator of the amino acid-sensing branch of the mTORC1 signaling pathway. The GATOR2 complex indirectly activates mTORC1 through the inhibition of the GATOR1 subcomplex. GATOR2 probably acts as an E3 ubiquitin-protein ligase toward GATOR1. In the presence of abundant amino acids, the GATOR2 complex mediates ubiquitination of the NPRL2 core component of the GATOR1 complex, leading to GATOR1 inactivation. In the absence of amino acids, GATOR2 is inhibited, activating the GATOR1 complex. This Mus musculus (Mouse) protein is GATOR2 complex protein WDR59.